Reading from the N-terminus, the 516-residue chain is Levanbiose-producing levanase (516 aa).

Residues 1–5 (MNYIK) are Cytoplasmic-facing. The helical transmembrane segment at 6 to 26 (AGKWLTVFLTFLGILLFIDLF) threads the bilayer. The Extracellular portion of the chain corresponds to 27–516 (PKEEHDQKTK…TVKHFDSIHE (490 aa)). Substrate-binding positions include 55–58 (WKND), 116–117 (WT), 181–182 (RD), E230, and W318. The active site involves D58.

Belongs to the glycosyl hydrolase 32 family.

The protein resides in the cell membrane. The catalysed reaction is Hydrolysis of (2-&gt;6)-beta-D-fructofuranan, to remove successive disaccharide residues as levanbiose, i.e. 6-(beta-D-fructofuranosyl)-D-fructose, from the end of the chain.. Its function is as follows. Catalyzes the degradation of levan mainly into levanbiose (difructose). Is not active on sucrose. This is Levanbiose-producing levanase (levB) from Bacillus subtilis (strain 168).